The chain runs to 406 residues: MTAPQTPNSFRTGPDERGRFGIFGGRFVAETLMPNILELERAYAEAKADPAFQAEMDSYLTHYVGRPSPLYFAERMSAHFGGAKIYFKREELNHTGSHKVNNVLGQILLARRMGKPRIIAETGAGQHGVATATLCARFGLKCVVYMGAVDVERQKPNVFRMKMLGAEVVPVQSGTRTLKDAMNEALRDWVTNVADTFYCIGTVAGPHPYPAMVRDFQAVIGRETKEQMLALEGRLPNSLVACIGGGSNAMGLFHPFLDDREVEIYGVEAAGRGVSTGLHAASLTGGRPGVLHGNRTYLLMNEDGQIADAHSISAGLDYPGIGPEHAWLHEMGRVTYLSATDQETLEAFRLCSLLEGIIPALEPAHALAKVAELAPTKPRDHLMVVNLSGRGDKDIPQVAEILGDAL.

Lys99 bears the N6-(pyridoxal phosphate)lysine mark.

It belongs to the TrpB family. As to quaternary structure, tetramer of two alpha and two beta chains. Pyridoxal 5'-phosphate serves as cofactor.

It carries out the reaction (1S,2R)-1-C-(indol-3-yl)glycerol 3-phosphate + L-serine = D-glyceraldehyde 3-phosphate + L-tryptophan + H2O. It functions in the pathway amino-acid biosynthesis; L-tryptophan biosynthesis; L-tryptophan from chorismate: step 5/5. In terms of biological role, the beta subunit is responsible for the synthesis of L-tryptophan from indole and L-serine. In Methylobacterium nodulans (strain LMG 21967 / CNCM I-2342 / ORS 2060), this protein is Tryptophan synthase beta chain.